Reading from the N-terminus, the 95-residue chain is Co-chaperonin GroES (95 aa).

It belongs to the GroES chaperonin family. Heptamer of 7 subunits arranged in a ring. Interacts with the chaperonin GroEL.

Its subcellular location is the cytoplasm. Its function is as follows. Together with the chaperonin GroEL, plays an essential role in assisting protein folding. The GroEL-GroES system forms a nano-cage that allows encapsulation of the non-native substrate proteins and provides a physical environment optimized to promote and accelerate protein folding. GroES binds to the apical surface of the GroEL ring, thereby capping the opening of the GroEL channel. The sequence is that of Co-chaperonin GroES from Chlorobium phaeobacteroides (strain DSM 266 / SMG 266 / 2430).